Consider the following 109-residue polypeptide: Hainantoxin-XVIII (109 aa).

A signal peptide spans 1–18 (MKLSIIIIATSLVIAVVA). Residues 19–46 (FPSKDSKAIENDKTEQRMEIVVQETARA) constitute a propeptide that is removed on maturation. Cystine bridges form between Cys-47–Cys-62, Cys-55–Cys-68, Cys-59–Cys-108, and Cys-61–Cys-81.

The protein belongs to the neurotoxin 25 family. F7 subfamily. As to expression, expressed by the venom gland.

The protein resides in the secreted. Functionally, putative ion channel inhibitor. This is Hainantoxin-XVIII from Cyriopagopus hainanus (Chinese bird spider).